The following is a 49-amino-acid chain: Agglutinin-1 (49 aa).

In terms of assembly, homooligomer. Glycosylated.

Beta-galactoside specific lectin. Has a hemagglutinating activity on erythrocytes. This is Agglutinin-1 from Pomacea flagellata (Apple snail).